A 183-amino-acid polypeptide reads, in one-letter code: Dual-action ribosomal maturation protein DarP (183 aa).

The protein belongs to the DarP family.

The protein resides in the cytoplasm. Its function is as follows. Member of a network of 50S ribosomal subunit biogenesis factors which assembles along the 30S-50S interface, preventing incorrect 23S rRNA structures from forming. Promotes peptidyl transferase center (PTC) maturation. The protein is Dual-action ribosomal maturation protein DarP of Citrobacter koseri (strain ATCC BAA-895 / CDC 4225-83 / SGSC4696).